Here is a 321-residue protein sequence, read N- to C-terminus: Glutaminase (321 aa).

Substrate-binding residues include Ser69, Asn120, Glu165, Asn172, Tyr196, Tyr248, and Val266.

The protein belongs to the glutaminase family. As to quaternary structure, homotetramer.

The enzyme catalyses L-glutamine + H2O = L-glutamate + NH4(+). The protein is Glutaminase of Parabacteroides distasonis (strain ATCC 8503 / DSM 20701 / CIP 104284 / JCM 5825 / NCTC 11152).